The chain runs to 308 residues: Small ribosomal subunit protein uS2 (308 aa).

N-acetylserine is present on serine 2. Laminin-binding regions lie at residues isoleucine 161–arginine 180 and arginine 205–glycine 229. [DE]-W-[ST] repeat units follow at residues glutamate 230–threonine 232, aspartate 245–serine 247, aspartate 279–serine 281, aspartate 288–serine 290, and aspartate 306–serine 308. The segment at glutamate 242–serine 308 is laminin-binding. The tract at residues alanine 262–serine 308 is disordered.

Belongs to the universal ribosomal protein uS2 family. Monomer (37LRP) and homodimer (67LR). Component of the small ribosomal subunit. Mature ribosomes consist of a small (40S) and a large (60S) subunit. The 40S subunit contains about 33 different proteins and 1 molecule of RNA (18S). The 60S subunit contains about 49 different proteins and 3 molecules of RNA (28S, 5.8S and 5S). Interacts with rps21. Interacts with several laminins including at least lamb1. Interacts with mdk. Post-translationally, acylated. Acylation may be a prerequisite for conversion of the monomeric 37 kDa laminin receptor precursor (37LRP) to the mature dimeric 67 kDa laminin receptor (67LR), and may provide a mechanism for membrane association. Cleaved by stromelysin-3 (ST3) at the cell surface. Cleavage by stromelysin-3 may be a mechanism to alter cell-extracellular matrix interactions.

The protein resides in the cell membrane. Its subcellular location is the cytoplasm. It localises to the nucleus. Its function is as follows. Required for the assembly and/or stability of the 40S ribosomal subunit. Required for the processing of the 20S rRNA-precursor to mature 18S rRNA in a late step of the maturation of 40S ribosomal subunits. Also functions as a cell surface receptor for laminin. Plays a role in cell adhesion to the basement membrane and in the consequent activation of signaling transduction pathways. May play a role in cell fate determination and tissue morphogenesis. The sequence is that of Small ribosomal subunit protein uS2 (rpsa) from Danio rerio (Zebrafish).